The following is a 308-amino-acid chain: CD276 antigen homolog (308 aa).

The signal sequence occupies residues 1–15 (MAALCLLLLLSLAEA). At 16–236 (IDLRVPELPV…VTGQHLSFPP (221 aa)) the chain is on the extracellular side. Residues 21 to 125 (PELPVIGLLD…VQNSSSASVS (105 aa)) enclose the Ig-like V-type domain. 2 disulfides stabilise this stretch: Cys-37–Cys-112 and Cys-155–Cys-210. Positions 135 to 228 (PTLHLEPSEA…DVTHASLTVT (94 aa)) constitute an Ig-like C2-type domain. Residues 237 to 257 (LVLWVTVGLSICLLCLLVALA) form a helical membrane-spanning segment. Topologically, residues 258–308 (CVCRKHLKQTCEEEQENAGNEEHEENGELKTAMQPLKVTSPGEDDDAECLE) are cytoplasmic. A disordered region spans residues 270–308 (EEQENAGNEEHEENGELKTAMQPLKVTSPGEDDDAECLE). Positions 299 to 308 (GEDDDAECLE) are enriched in acidic residues.

The protein belongs to the immunoglobulin superfamily. BTN/MOG family.

Its subcellular location is the membrane. In terms of biological role, modulates immune responses. This chain is CD276 antigen homolog (cd276), found in Xenopus laevis (African clawed frog).